The chain runs to 90 residues: Mitochondrial import inner membrane translocase subunit Tim8 A (90 aa).

A Twin CX3C motif motif is present at residues 36 to 59 (CWEKCMDKPGPKLDSRTEVCFVNC). Cystine bridges form between Cys36/Cys59 and Cys40/Cys55.

The protein belongs to the small Tim family. Heterohexamer; composed of 3 copies of TIMM8A and 3 copies of TIMM13, named soluble 70 kDa complex. Associates with the TIM22 complex, whose core is composed of TIMM22.

The protein localises to the mitochondrion inner membrane. Mitochondrial intermembrane chaperone that participates in the import and insertion of some multi-pass transmembrane proteins into the mitochondrial inner membrane. Also required for the transfer of beta-barrel precursors from the TOM complex to the sorting and assembly machinery (SAM complex) of the outer membrane. Acts as a chaperone-like protein that protects the hydrophobic precursors from aggregation and guide them through the mitochondrial intermembrane space. The TIMM8-TIMM13 complex mediates the import of some proteins while the predominant TIMM9-TIMM10 70 kDa complex mediates the import of much more proteins. In Danio rerio (Zebrafish), this protein is Mitochondrial import inner membrane translocase subunit Tim8 A (timm8a).